A 414-amino-acid polypeptide reads, in one-letter code: Cell division protein FtsA (414 aa).

The protein belongs to the FtsA/MreB family. Self-interacts. Interacts with FtsZ.

It is found in the cell inner membrane. Functionally, cell division protein that is involved in the assembly of the Z ring. May serve as a membrane anchor for the Z ring. The sequence is that of Cell division protein FtsA from Neisseria meningitidis serogroup B (strain ATCC BAA-335 / MC58).